The chain runs to 343 residues: NADH-ubiquinone oxidoreductase chain 2 (343 aa).

A run of 8 helical transmembrane segments spans residues 1 to 21 (MNPM…TMIT), 59 to 81 (YYLI…ALNT), 96 to 116 (TIIT…SWLP), 150 to 170 (NITL…LGSL), 178 to 198 (LMAF…TMAP), 200 to 220 (ISTL…LLIN), 241 to 261 (MTIL…SGFM), and 270 to 290 (LISM…LLSL).

This sequence belongs to the complex I subunit 2 family.

Its subcellular location is the mitochondrion inner membrane. The enzyme catalyses a ubiquinone + NADH + 5 H(+)(in) = a ubiquinol + NAD(+) + 4 H(+)(out). Its function is as follows. Core subunit of the mitochondrial membrane respiratory chain NADH dehydrogenase (Complex I) that is believed to belong to the minimal assembly required for catalysis. Complex I functions in the transfer of electrons from NADH to the respiratory chain. The immediate electron acceptor for the enzyme is believed to be ubiquinone. The polypeptide is NADH-ubiquinone oxidoreductase chain 2 (MT-ND2) (Lycodon semicarinatus (Ryukyu odd-tooth snake)).